The chain runs to 346 residues: Envelope glycoprotein M (346 aa).

Topologically, residues 1–12 (MALSRVDVINMR) are intravirion. The helical transmembrane segment at 13–33 (IWVLSIICACLTYVNVTVHLV) threads the bilayer. The Virion surface segment spans residues 34 to 76 (AVHFPNLGFPCAYYEINDMKAINLSIRNDIRSLTPQLYLNPIQ). The chain crosses the membrane as a helical span at residues 77–97 (LICYVVFMDICFFFILVYYIV). Over 98 to 117 (CCVKVFSSEKTPNINQSTRD) the chain is Intravirion. Residues 118-140 (ITWMGDSLSCFQFVLTMDTYQFF) traverse the membrane as a helical segment. The Virion surface portion of the chain corresponds to 141–147 (VTCLSFR). Residues 148–168 (LVTLAAFTYCLFFICFTAFTL) traverse the membrane as a helical segment. The Intravirion segment spans residues 169–199 (TMITQYQSSERSFFVLKRIHPKLKGTIKYKT). Residues 200–220 (IIINMIELMLGFSSMVFAITI) form a helical membrane-spanning segment. Residues 221-236 (CLGLGNNFYIKSSTVA) lie on the Virion surface side of the membrane. Residues 237 to 257 (FASINTFFVMSFVYSLVIELI) traverse the membrane as a helical segment. Residues 258-263 (LHQYVK) lie on the Intravirion side of the membrane. The helical transmembrane segment at 264-284 (VQFGLHFGILFGILGLTYPIL) threads the bilayer. Over 285–293 (KYDSLFKTE) the chain is Virion surface. Residues 294-314 (WTVKFIVNLAVITIVCLSFII) form a helical membrane-spanning segment. Over 315–346 (CRLIRFFMRKHHNYKKLPTTVEDLDVLEEANE) the chain is Intravirion.

This sequence belongs to the herpesviridae glycoprotein M family. In terms of assembly, interacts (via N-terminus) with gN (via N-terminus). The gM-gN heterodimer forms the gCII complex.

Its subcellular location is the virion membrane. It localises to the host Golgi apparatus. It is found in the host trans-Golgi network. The protein resides in the host endosome membrane. The protein localises to the host nucleus inner membrane. Its function is as follows. Envelope glycoprotein important for virion assembly and egress. Plays a role in the correct incorporation of gH-gL into virion membrane. Directs the glycoprotein N (gN) to the host trans-Golgi network. This chain is Envelope glycoprotein M, found in Homo sapiens (Human).